Consider the following 72-residue polypeptide: Prokaryotic ubiquitin-like protein Pup (72 aa).

Gly residues predominate over residues 1-11 (MAQRDTGGGQQ). Positions 1–41 (MAQRDTGGGQQRTGRRDDETAEAEVEESGASDLKERHEKLS) are disordered. The span at 19-29 (ETAEAEVEESG) shows a compositional bias: acidic residues. Residues 22–61 (EAEVEESGASDLKERHEKLSEDVDSLLDEIDDVLEENAEE) are a coiled coil. Positions 28–66 (SGASDLKERHEKLSEDVDSLLDEIDDVLEENAEEFVKGY) are ARC ATPase binding. A compositionally biased stretch (basic and acidic residues) spans 32–41 (DLKERHEKLS). Glutamine 72 carries the deamidated glutamine modification. Glutamine 72 participates in a covalent cross-link: Isoglutamyl lysine isopeptide (Gln-Lys) (interchain with K-? in acceptor proteins).

It belongs to the prokaryotic ubiquitin-like protein family. As to quaternary structure, strongly interacts with the proteasome-associated ATPase ARC through a hydrophobic interface; the interacting region of Pup lies in its C-terminal half. There is one Pup binding site per ARC hexamer ring. Is modified by deamidation of its C-terminal glutamine to glutamate by the deamidase Dop, a prerequisite to the subsequent pupylation process.

It functions in the pathway protein degradation; proteasomal Pup-dependent pathway. Protein modifier that is covalently attached to lysine residues of substrate proteins, thereby targeting them for proteasomal degradation. The tagging system is termed pupylation. This Parafrankia sp. (strain EAN1pec) protein is Prokaryotic ubiquitin-like protein Pup.